Here is a 179-residue protein sequence, read N- to C-terminus: Translation initiation factor IF-3 (179 aa).

The protein belongs to the IF-3 family. In terms of assembly, monomer.

The protein localises to the cytoplasm. Functionally, IF-3 binds to the 30S ribosomal subunit and shifts the equilibrium between 70S ribosomes and their 50S and 30S subunits in favor of the free subunits, thus enhancing the availability of 30S subunits on which protein synthesis initiation begins. This chain is Translation initiation factor IF-3, found in Buchnera aphidicola subsp. Acyrthosiphon pisum (strain APS) (Acyrthosiphon pisum symbiotic bacterium).